Reading from the N-terminus, the 300-residue chain is MGRAREVGWMAAGLMIGAGACYCVYKLTIGRDDSEKLEEEGEEEWDDDQELDEEEPDIWFDFETMARPWTEDGDWTEPGAPGGTEDRPSGGGKANRAHPIKQRPFPYEHKNTWSAQNCKNGSCVLDLSKCLFIQGKLLFAEPKDAGFPFSQDINSHLASLSMARNTSPTPDPTVREALCAPDNLNASIESQGQIKMYINEVCRETVSRCCNSFLQQAGLNLLISMTVINNMLAKSASDLKFPLISEGSGCAKVQVLKPLMGLSEKPVLAGELVGAQMLFSFMSLFIRNGNREILLETPAP.

At 1–6 (MGRARE) the chain is on the mitochondrial intermembrane side. Mitochondrion outer membrane (MOM)-targeting sequence regions lie at residues 1 to 6 (MGRARE) and 26 to 36 (KLTIGRDDSEK). The helical; Signal-anchor transmembrane segment at 7-27 (VGWMAAGLMIGAGACYCVYKL) threads the bilayer. Over 28 to 300 (TIGRDDSEKL…REILLETPAP (273 aa)) the chain is Cytoplasmic. 2 disordered regions span residues 35–54 (EKLEEEGEEEWDDDQELDEE) and 69–99 (WTEDGDWTEPGAPGGTEDRPSGGGKANRAHP).

Belongs to the eutherian X-chromosome-specific Armcx family.

The protein resides in the mitochondrion. Its subcellular location is the mitochondrion outer membrane. In terms of biological role, may regulate the dynamics and distribution of mitochondria in neural cells. This Homo sapiens (Human) protein is Protein ARMCX6 (ARMCX6).